The sequence spans 114 residues: uncharacterized protein (114 aa).

The segment covering Met-1–Glu-20 has biased composition (basic and acidic residues). Residues Met-1–Gln-22 form a disordered region.

Its function is as follows. May be involved in phosphatase regulation and/or generation of precursor metabolites and energy. This is an uncharacterized protein from Saccharomyces cerevisiae (strain ATCC 204508 / S288c) (Baker's yeast).